Reading from the N-terminus, the 339-residue chain is Probable protein phosphatase 2C 28 (339 aa).

Residues 87-334 (DHGYHLVKGQ…DDISCVVVSF (248 aa)) enclose the PPM-type phosphatase domain. The Mn(2+) site is built by aspartate 124, glycine 125, aspartate 286, and aspartate 325.

It belongs to the PP2C family. Mg(2+) is required as a cofactor. It depends on Mn(2+) as a cofactor.

It catalyses the reaction O-phospho-L-seryl-[protein] + H2O = L-seryl-[protein] + phosphate. It carries out the reaction O-phospho-L-threonyl-[protein] + H2O = L-threonyl-[protein] + phosphate. The protein is Probable protein phosphatase 2C 28 of Arabidopsis thaliana (Mouse-ear cress).